We begin with the raw amino-acid sequence, 159 residues long: Intron-encoded endonuclease ai4 (159 aa).

This sequence belongs to the LAGLIDADG endonuclease family.

It localises to the mitochondrion. Its function is as follows. Mitochondrial DNA endonuclease involved in intron homing. The chain is Intron-encoded endonuclease ai4 (ai4) from Dictyostelium discoideum (Social amoeba).